The primary structure comprises 165 residues: Fibrinogen-binding protein (165 aa).

The first 29 residues, 1–29 (MKNKLIAKSLLTIAAIGITTTTIASTADA), serve as a signal peptide directing secretion.

As to quaternary structure, interacts with host fibrinogen alpha chain/FGA. Interacts with host complement protein C3.

Its subcellular location is the secreted. Extracellular fibrinogen-binding protein that plays an important role in virulence. By interacting with the alpha chain of fibrinogen and its derivative fibrin, enhances a non-functional interaction between fibrinogen and platelets and is responsible for repression of fibrinogen-dependent platelet aggregation. In addition, assembles a fibrinogen protective shield around the bacteria which results in impaired phagocytic clearance by the host. Mechanistically, interacts with host complement C3b deposited on the surface of the bacterium via its C-terminal and then recruits fibrinogen via its N-terminal. The chain is Fibrinogen-binding protein (fib) from Staphylococcus aureus.